Reading from the N-terminus, the 122-residue chain is Small ribosomal subunit protein uS13 (122 aa).

The segment at 99–122 is disordered; the sequence is RGQRTHTNARTRKGPAKAIAGKKK.

The protein belongs to the universal ribosomal protein uS13 family. In terms of assembly, part of the 30S ribosomal subunit. Forms a loose heterodimer with protein S19. Forms two bridges to the 50S subunit in the 70S ribosome.

In terms of biological role, located at the top of the head of the 30S subunit, it contacts several helices of the 16S rRNA. In the 70S ribosome it contacts the 23S rRNA (bridge B1a) and protein L5 of the 50S subunit (bridge B1b), connecting the 2 subunits; these bridges are implicated in subunit movement. Contacts the tRNAs in the A and P-sites. In Allorhizobium ampelinum (strain ATCC BAA-846 / DSM 112012 / S4) (Agrobacterium vitis (strain S4)), this protein is Small ribosomal subunit protein uS13.